Reading from the N-terminus, the 607-residue chain is Elongation factor 4 (607 aa).

Residues 11–193 (ENIRNFSIIA…KIVEVVPAPD (183 aa)) form the tr-type G domain. GTP-binding positions include 23–28 (DHGKST) and 140–143 (NKID).

Belongs to the TRAFAC class translation factor GTPase superfamily. Classic translation factor GTPase family. LepA subfamily.

It localises to the cell membrane. It carries out the reaction GTP + H2O = GDP + phosphate + H(+). Required for accurate and efficient protein synthesis under certain stress conditions. May act as a fidelity factor of the translation reaction, by catalyzing a one-codon backward translocation of tRNAs on improperly translocated ribosomes. Back-translocation proceeds from a post-translocation (POST) complex to a pre-translocation (PRE) complex, thus giving elongation factor G a second chance to translocate the tRNAs correctly. Binds to ribosomes in a GTP-dependent manner. The sequence is that of Elongation factor 4 from Staphylococcus aureus (strain USA300).